The following is a 1105-amino-acid chain: Ran-binding protein 6 (1105 aa).

An N-acetylalanine modification is found at Ala2. 4 HEAT repeats span residues 219-257 (FKDF…TVPK), 361-399 (KVVL…GCHQ), 402-440 (ESIL…DFAP), and 444-483 (KKFH…DCPK). Residues 333–383 (DEMEEDDFDSNAVAAESALDRLACGLGGKVVLPMTKEHIMQMLQSPDWKYR) are ran-GTP binding. Residues 806 to 842 (KAKLEGHFKNQELRQVKRQEENYDQQVEMSLQDEDEC) are a coiled coil. 3 HEAT repeats span residues 866–905 (LPWF…HCSP), 908–946 (FKYV…FGGD), and 949–987 (RSLC…IGKI).

This sequence belongs to the importin beta family.

The protein resides in the cytoplasm. Its subcellular location is the nucleus. Functionally, may function in nuclear protein import as nuclear transport receptor. The chain is Ran-binding protein 6 (RANBP6) from Homo sapiens (Human).